Here is a 676-residue protein sequence, read N- to C-terminus: Long-chain-fatty-acid--CoA ligase 1 (676 aa).

246–257 is a binding site for ATP; that stretch reads YTSGSTGLPKGV. The FACS motif lies at 511 to 560; sequence DGWFRTGDVGELTPEGLLRIIDRKKNLVKTQNGEYIALEKLESRYRTSSL.

Belongs to the ATP-dependent AMP-binding enzyme family. It depends on Mg(2+) as a cofactor.

It catalyses the reaction a long-chain fatty acid + ATP + CoA = a long-chain fatty acyl-CoA + AMP + diphosphate. Esterification, concomitant with transport, of exogenous long-chain fatty acids into metabolically active CoA thioesters for subsequent degradation or incorporation into phospholipids. It may supplement intracellular myristoyl-CoA pools from exogenous myristate. Preferentially acts on C12:0-C16:0 fatty acids with myristic and pentadecanic acid (C15:0) having the highest activities. Appears to play a role in the maintenance of cell viability during stationary phase. This is Long-chain-fatty-acid--CoA ligase 1 (lcf1) from Schizosaccharomyces pombe (strain 972 / ATCC 24843) (Fission yeast).